The sequence spans 348 residues: Uroporphyrinogen decarboxylase (348 aa).

Residues 28 to 32 (RQAGR), Asp78, Tyr154, Thr209, and His325 each bind substrate.

Belongs to the uroporphyrinogen decarboxylase family. As to quaternary structure, homodimer.

The protein resides in the cytoplasm. It catalyses the reaction uroporphyrinogen III + 4 H(+) = coproporphyrinogen III + 4 CO2. It functions in the pathway porphyrin-containing compound metabolism; protoporphyrin-IX biosynthesis; coproporphyrinogen-III from 5-aminolevulinate: step 4/4. Functionally, catalyzes the decarboxylation of four acetate groups of uroporphyrinogen-III to yield coproporphyrinogen-III. This Rhodopseudomonas palustris (strain BisA53) protein is Uroporphyrinogen decarboxylase.